The following is an 858-amino-acid chain: NEDD4-binding protein 1 (858 aa).

Residues 17–37 (TCTEPPGGRQSPTASRAQPDS) form a disordered region. Polar residues predominate over residues 26–37 (QSPTASRAQPDS). Positions 96-180 (KEDVYKAKEY…VQQFVALFQE (85 aa)) constitute a KH-like domain. Disordered regions lie at residues 262–321 (EDKT…TWTV) and 388–424 (QKTQ…KEKE). Basic and acidic residues predominate over residues 285–316 (RSSESEQRDTKRQYSLERREEEQCEEREREPT). The segment covering 389 to 418 (KTQSTQGAQRTSRTPDPSPCANASSTSTSN) has biased composition (polar residues). Positions 598 to 750 (LRHIIIDGSN…LGKHGPHLDE (153 aa)) constitute an RNase NYN domain. Polar residues predominate over residues 774 to 784 (SVYSQAAQSTA). Residues 774–823 (SVYSQAAQSTAHPSSPSHWPHSGPPDWHLPRPSPSPPPQRSPSETTELKR) are disordered. Residues 785–799 (HPSSPSHWPHSGPPD) show a composition bias toward low complexity. Positions 804-813 (RPSPSPPPQR) are enriched in pro residues. The tract at residues 813–858 (RSPSETTELKRKLYDIFPDQKQRIDRILSDNPYMRDLNALSGLLLG) is coCUN.

This sequence belongs to the N4BP1 family.

The protein resides in the nucleus. The protein localises to the nucleolus. It is found in the PML body. In terms of biological role, potent suppressor of cytokine production that acts as a regulator of innate immune signaling and inflammation. Acts as a key negative regulator of select cytokine and chemokine responses elicited by TRIF-independent Toll-like receptors (TLRs), thereby limiting inflammatory cytokine responses to minor insults. Has ribonuclease activity. In Danio rerio (Zebrafish), this protein is NEDD4-binding protein 1.